The primary structure comprises 406 residues: NADH-quinone oxidoreductase subunit D (406 aa).

This sequence belongs to the complex I 49 kDa subunit family. As to quaternary structure, NDH-1 is composed of 14 different subunits. Subunits NuoB, C, D, E, F, and G constitute the peripheral sector of the complex.

The protein localises to the cell inner membrane. The catalysed reaction is a quinone + NADH + 5 H(+)(in) = a quinol + NAD(+) + 4 H(+)(out). In terms of biological role, NDH-1 shuttles electrons from NADH, via FMN and iron-sulfur (Fe-S) centers, to quinones in the respiratory chain. The immediate electron acceptor for the enzyme in this species is believed to be ubiquinone. Couples the redox reaction to proton translocation (for every two electrons transferred, four hydrogen ions are translocated across the cytoplasmic membrane), and thus conserves the redox energy in a proton gradient. The chain is NADH-quinone oxidoreductase subunit D from Rhizorhabdus wittichii (strain DSM 6014 / CCUG 31198 / JCM 15750 / NBRC 105917 / EY 4224 / RW1) (Sphingomonas wittichii).